The chain runs to 191 residues: Thymidine kinase (191 aa).

ATP contacts are provided by residues 9–16 (GSMNSGKT) and 85–88 (DESQ). The Proton acceptor role is filled by Glu-86. Zn(2+) is bound by residues Cys-143, Cys-146, Cys-181, and Cys-184.

It belongs to the thymidine kinase family. Homotetramer.

Its subcellular location is the cytoplasm. The catalysed reaction is thymidine + ATP = dTMP + ADP + H(+). The chain is Thymidine kinase from Listeria innocua serovar 6a (strain ATCC BAA-680 / CLIP 11262).